Consider the following 240-residue polypeptide: Serine protease SplB (240 aa).

Residues 1 to 36 form the signal peptide; it reads MNKNVVIKSLAALTILTSVTGIGITLVEEVQQTAKA. Catalysis depends on charge relay system residues His-75, Asp-113, and Ser-193.

This sequence belongs to the peptidase S1B family.

It is found in the secreted. In terms of biological role, serine protease that cleaves specifically after the sequence Trp-Glu-Leu-Gln. In Staphylococcus aureus (strain MW2), this protein is Serine protease SplB (splB).